The sequence spans 745 residues: Elongation factor G, mitochondrial (745 aa).

The 278-residue stretch at 40-317 (ERIRNIGISA…AVLDYLPNPG (278 aa)) folds into the tr-type G domain. GTP contacts are provided by residues 49–56 (AHIDSGKT), 116–120 (DTPGH), and 170–173 (NKLD).

Belongs to the TRAFAC class translation factor GTPase superfamily. Classic translation factor GTPase family. EF-G/EF-2 subfamily.

It is found in the mitochondrion. The protein operates within protein biosynthesis; polypeptide chain elongation. Its function is as follows. Mitochondrial GTPase that catalyzes the GTP-dependent ribosomal translocation step during translation elongation. During this step, the ribosome changes from the pre-translocational (PRE) to the post-translocational (POST) state as the newly formed A-site-bound peptidyl-tRNA and P-site-bound deacylated tRNA move to the P and E sites, respectively. Catalyzes the coordinated movement of the two tRNA molecules, the mRNA and conformational changes in the ribosome. Essential during development as it acts as a retrograde signal from mitochondria to the nucleus to slow down cell proliferation if mitochondrial energy output is low. In Drosophila yakuba (Fruit fly), this protein is Elongation factor G, mitochondrial.